A 323-amino-acid chain; its full sequence is Aquaporin-4 (323 aa).

The Cytoplasmic segment spans residues 1-36 (MSDRPTARRWGKCGPLCTRENIMVAFKGVWTQAFWK). Residues cysteine 13 and cysteine 17 are each lipidated (S-palmitoyl cysteine). Residues 37–57 (AVTAEFLAMLIFVLLSLGSTI) traverse the membrane as a helical segment. Topologically, residues 58-69 (NWGGTEKPLPVD) are extracellular. A helical transmembrane segment spans residues 70 to 89 (MVLISLCFGLSIATMVQCFG). Topologically, residues 90-93 (HISG) are cytoplasmic. Residues 94-101 (GHINPAVT) constitute an intramembrane region (discontinuously helical). The NPA 1 signature appears at 97-99 (NPA). Residues 102–115 (VAMVCTRKISIAKS) are Cytoplasmic-facing. At serine 111 the chain carries Phosphoserine; by PKG. A helical transmembrane segment spans residues 116–136 (VFYIAAQCLGAIIGAGILYLV). Residues 137 to 155 (TPPSVVGGLGVTMVHGNLT) are Extracellular-facing. Asparagine 153 carries an N-linked (GlcNAc...) asparagine glycan. A helical transmembrane segment spans residues 156 to 176 (AGHGLLVELIITFQLVFTIFA). Residues 177-184 (SCDSKRTD) lie on the Cytoplasmic side of the membrane. Serine 180 is modified (phosphoserine; by PKC). A helical membrane pass occupies residues 185 to 205 (VTGSIALAIGFSVAIGHLFAI). Asparagine 206 carries N-linked (GlcNAc...) asparagine glycosylation. At 206-208 (NYT) the chain is on the extracellular side. Positions 209 to 222 (GASMNPARSFGPAV) form an intramembrane region, discontinuously helical. The NPA 2 signature appears at 213-215 (NPA). Over 223 to 231 (IMGNWENHW) the chain is Extracellular. The chain crosses the membrane as a helical span at residues 232–252 (IYWVGPIIGAVLAGGLYEYVF). Topologically, residues 253–323 (CPDVEFKRRF…DQSGEVLSSV (71 aa)) are cytoplasmic. A phosphoserine mark is found at serine 276 and serine 285. Residue threonine 289 is modified to Phosphothreonine. Serine 321 bears the Phosphoserine mark.

Belongs to the MIP/aquaporin (TC 1.A.8) family. Homotetramer. The tetramers can form oligomeric arrays in membranes. The size of the oligomers differs between tissues and is smaller in skeletal muscle than in brain. Interaction between AQP4 oligomeric arrays in close-by cells can contribute to cell-cell adhesion. Part of a complex containing MLC1, TRPV4, HEPACAM and ATP1B1. In terms of processing, phosphorylation by PKC at Ser-180 reduces conductance by 50%. Phosphorylation by PKG at Ser-111 in response to glutamate increases conductance by 40%. Isoform 2: Palmitoylated on its N-terminal region. Isoform 1: Not palmitoylated. Detected in skeletal muscle. Detected in stomach, along the glandular base region of the fundic gland (at protein level). Detected in brain, lung and skeletal muscle, and at much lower levels in heart and ovary.

The protein resides in the cell membrane. The protein localises to the basolateral cell membrane. It localises to the endosome membrane. Its subcellular location is the sarcolemma. It is found in the cell projection. The enzyme catalyses H2O(in) = H2O(out). Its function is as follows. Forms a water-specific channel. Plays an important role in brain water homeostasis. It is involved in glymphatic solute transport and is required for a normal rate of water exchange across the blood brain interface. Required for normal levels of cerebrospinal fluid influx into the brain cortex and parenchyma along paravascular spaces that surround penetrating arteries, and for normal drainage of interstitial fluid along paravenous drainage pathways. Thereby, it is required for normal clearance of solutes from the brain interstitial fluid, including soluble beta-amyloid peptides derived from APP. Plays a redundant role in urinary water homeostasis and urinary concentrating ability. The protein is Aquaporin-4 (AQP4) of Homo sapiens (Human).